The sequence spans 215 residues: TLD domain-containing protein 2 (215 aa).

Residues 1–46 (MRGLRWRYTRLPSQVEDTLSGEEGNEEEEEEEAAPDPAAAPEDPTV) are disordered. The span at 19–34 (LSGEEGNEEEEEEEAA) shows a compositional bias: acidic residues. The region spanning 54 to 215 (QVLSASEIRQ…IQELEAWLLS (162 aa)) is the TLDc domain.

The protein belongs to the OXR1 family.

The polypeptide is TLD domain-containing protein 2 (TLDC2) (Homo sapiens (Human)).